Here is a 208-residue protein sequence, read N- to C-terminus: Protein-L-isoaspartate O-methyltransferase (208 aa).

Residue S59 is part of the active site.

It belongs to the methyltransferase superfamily. L-isoaspartyl/D-aspartyl protein methyltransferase family.

It localises to the cytoplasm. The catalysed reaction is [protein]-L-isoaspartate + S-adenosyl-L-methionine = [protein]-L-isoaspartate alpha-methyl ester + S-adenosyl-L-homocysteine. In terms of biological role, catalyzes the methyl esterification of L-isoaspartyl residues in peptides and proteins that result from spontaneous decomposition of normal L-aspartyl and L-asparaginyl residues. It plays a role in the repair and/or degradation of damaged proteins. The sequence is that of Protein-L-isoaspartate O-methyltransferase from Erwinia tasmaniensis (strain DSM 17950 / CFBP 7177 / CIP 109463 / NCPPB 4357 / Et1/99).